The following is a 3175-amino-acid chain: Replicase polyprotein 1ab (3175 aa).

A C4-type; atypical zinc finger spans residues 25 to 44; the sequence is CEHGAGLCCEVDGSTLCAEC. Positions 66–156 constitute a Peptidase C31 domain; the sequence is SPVPVGHKFL…PAANSLIVTT (91 aa). Residues 157–260 form the Peptidase C32 domain; the sequence is DQEQDGFCWL…WSCLPAGNYG (104 aa). Residues Cys164 and His230 each act as for Nsp1 papain-like cysteine proteinase activity in the active site. Residues 261–339 form an OTU-like region; it reads GYNPPGDGAC…KQHWRVKRAK (79 aa). Residues 261-360 form the Peptidase C33 domain; it reads GYNPPGDGAC…RGICNCQRMS (100 aa). Cys270 functions as the For Nsp2 cysteine proteinase activity in the catalytic mechanism. Cys319 contacts Zn(2+). His332 serves as the catalytic For Nsp2 cysteine proteinase activity. Residues Cys349, Cys354, and Cys356 each coordinate Zn(2+). The interval 386 to 451 is disordered; that stretch reads VVTPEGQPRP…TRLQGASTQE (66 aa). A run of 7 helical transmembrane segments spans residues 530 to 550, 551 to 571, 625 to 645, 829 to 849, 903 to 923, 935 to 955, and 977 to 997; these read AVIA…SFAI, GLIP…SSAN, FDAA…ILYL, LIGG…STFT, YWIA…RLAI, LVLL…SLAG, and LVTM…LMGL. The tract at residues 530 to 645 is HD1; that stretch reads AVIACLLPIW…DLCSFAILYL (116 aa). Positions 829-997 are HD2; sequence LIGGWIYGIC…ALAVYSLMGL (169 aa). Positions 1065–1268 constitute a Peptidase S32 domain; it reads GLFRSPKARG…MLIDGLSNRE (204 aa). Catalysis depends on charge relay system; for 3C-like serine proteinase activity residues His1103, Asp1129, and Ser1184. 4 helical membrane passes run 1291–1311, 1333–1353, 1355–1375, and 1385–1405; these read AYLP…KSVG, CLFH…WFYI, AAGT…MLFV, and GWAI…AALG. Positions 1291-1405 are HD3; that stretch reads AYLPYVLGFF…SITMLAAALG (115 aa). Residue Asn1501 is glycosylated (N-linked (GlcNAc...) asparagine; by host). The segment at 1577 to 1614 is disordered; that stretch reads NDTPVKPMPSRRRRKGLPKGAQLEWDRHQEEKRNAGDD. The segment covering 1600–1612 has biased composition (basic and acidic residues); that stretch reads EWDRHQEEKRNAG. One can recognise a NiRAN domain in the interval 1716 to 1883; sequence LANPVEAVNQ…DKVAAAVSGD (168 aa). Positions 2116–2251 constitute a RdRp catalytic domain; sequence KYCLETDLES…TTPNQHYAAS (136 aa). Positions 2371 to 2438 constitute an AV ZBD domain; it reads SAVCTVCGAA…SPKQMVPKVP (68 aa). Residues Cys2374, Cys2377, Cys2387, Cys2392, Cys2395, His2399, His2402, Cys2403, Cys2412, His2414, Cys2423, and Cys2426 each contribute to the Zn(2+) site. The 166-residue stretch at 2496–2661 folds into the (+)RNA virus helicase ATP-binding domain; it reads PGSHIAVPLQ…LRHFVSLEPL (166 aa). 2528–2535 provides a ligand contact to ATP; that stretch reads GPPGSGKT. In terms of domain architecture, (+)RNA virus helicase C-terminal spans 2662-2793; that stretch reads RVCHRFGAAV…PPTACHLGQE (132 aa). The 91-residue stretch at 2840–2930 folds into the AV-Nsp11N/CoV-Nsp15M domain; that stretch reads KISCLPRVAQ…LTEWVDGKAR (91 aa). The 123-residue stretch at 2932 to 3054 folds into the NendoU domain; it reads LPDSLFSSGR…MVWRNATFYV (123 aa). Catalysis depends on residues His2963, His2978, and Lys3007.

The protein belongs to the arteriviridae polyprotein family. In terms of assembly, nsp1 interacts with cellular transcription cofactor SND1/p100. Specific enzymatic cleavages in vivo by its own proteases yield mature proteins. There are two alternative pathways for processing. Either nsp4-5 is cleaved, which represents the major pathway or the nsp5-6 and nsp6-7 are processed, which represents the minor pathway. The major pathway occurs when nsp2 acts as a cofactor for nsp4.

The protein resides in the host nucleus. The protein localises to the host cytoplasm. It is found in the host membrane. It localises to the host perinuclear region. The catalysed reaction is RNA(n) + a ribonucleoside 5'-triphosphate = RNA(n+1) + diphosphate. It carries out the reaction ATP + H2O = ADP + phosphate + H(+). The enzyme catalyses Thiol-dependent hydrolysis of ester, thioester, amide, peptide and isopeptide bonds formed by the C-terminal Gly of ubiquitin (a 76-residue protein attached to proteins as an intracellular targeting signal).. It catalyses the reaction uridylyl-uridylyl-ribonucleotide-RNA = a 3'-end uridylyl-2',3'-cyclophospho-uridine-RNA + a 5'-end dephospho-ribonucleoside-RNA. Functionally, the replicase polyprotein 1ab is a multifunctional protein: it contains the activities necessary for the transcription of negative stranded RNA, leader RNA, subgenomic mRNAs and progeny virion RNA as well as proteinases responsible for the cleavage of the polyprotein into functional products. Nsp1 is essential for viral subgenomic mRNA synthesis. Its function is as follows. Nsp2 cysteine proteinase which cleaves the nsp2/nsp3 site in the polyprotein. Also displays deubiquitinating and deISGylase activities. The deubiquitinating activity cleaves both ubiquitinated and ISGylated products and may therefore regulate ubiquitin and ISG15 dependent host innate immunity. In terms of biological role, the 3C-like serine proteinase chain is responsible for the majority of cleavages as it cleaves the C-terminus of the polyprotein. Functionally, the helicase chain, which contains a zinc finger structure, displays RNA and DNA duplex-unwinding activities with 5' to 3' polarity. Plays a role in viral transcription/replication and prevents the simultaneous activation of host cell dsRNA sensors, such as MDA5/IFIH1, OAS, and PKR. Acts by degrading the 5'-polyuridines generated during replication of the poly(A) region of viral genomic and subgenomic RNAs. Catalyzes a two-step reaction in which a 2'3'-cyclic phosphate (2'3'-cP) is first generated by 2'-O transesterification, which is then hydrolyzed to a 3'-phosphate (3'-P). If not degraded, poly(U) RNA would hybridize with poly(A) RNA tails and activate host dsRNA sensors. In Equidae (horses), this protein is Replicase polyprotein 1ab (rep).